Reading from the N-terminus, the 1816-residue chain is Nuclear pore complex protein Nup98-Nup96 (1816 aa).

Residues 1–156 (MFNKSFGTPF…LFGPSSFTAA (156 aa)) form an FG repeats 1 region. The GLEBS; interaction with RAE1 stretch occupies residues 157–213 (PTGTTIKFNPPTGTDTMVKAGVSTNISTKHQCITAMKEYESKSLEELRLEDYQANRK). The segment at 214-480 (GPQNQVGAGT…NTSTAILGFG (267 aa)) is FG repeats 2. Residues 512–535 (PFGDSPLFRNPMSDPKKKEERLKP) form a disordered region. S524 carries the post-translational modification Phosphoserine. Over residues 525-534 (DPKKKEERLK) the composition is skewed to basic and acidic residues. Residue K563 forms a Glycyl lysine isopeptide (Lys-Gly) (interchain with G-Cter in SUMO2) linkage. Position 603 is an N6-acetyllysine; alternate (K603). K603 is covalently cross-linked (Glycyl lysine isopeptide (Lys-Gly) (interchain with G-Cter in SUMO2); alternate). A phosphoserine mark is found at S608, S612, S618, S623, S625, and S653. Residues 663 to 682 (IAKPIPQTPESAGNKNNSSS) form a disordered region. K665 is covalently cross-linked (Glycyl lysine isopeptide (Lys-Gly) (interchain with G-Cter in SUMO2)). Residue T670 is modified to Phosphothreonine. Residues 670-682 (TPESAGNKNNSSS) show a composition bias toward polar residues. Phosphoserine is present on residues S673, S680, S681, and S839. A Peptidase S59 domain is found at 738–880 (KVGYYTIPSM…GSWVFKVSHF (143 aa)). S881 (nucleophile) is an active-site residue. The disordered stretch occupies residues 886–937 (QDSDEEEEEHPPKTTSKKLKTAPLPPAGQATTFQMTLNGKPAPPPQSQSPEV). 6 positions are modified to phosphoserine: S888, S934, S1027, S1042, S1059, and S1063. A Phosphothreonine modification is found at T1069. A Phosphoserine modification is found at S1328. T1771 bears the Phosphothreonine mark.

It belongs to the nucleoporin GLFG family. In terms of assembly, part of the nuclear pore complex (NPC). Interacts directly with NUP96. Part of the Nup160 subcomplex in the nuclear pore which is composed of NUP160, NUP133, NUP107 and NUP96; this complex plays a role in RNA export and in tethering NUP98 and NUP153 to the nucleus. Interacts with RAE1. Does not interact with TPR. Interacts directly with NUP88 and NUP214, subunits of the cytoplasmic filaments of the NPC. Interacts (via N-terminus) with DHX9 (via DRBM, OB-fold and RGG domains); this interaction occurs in a RNA-dependent manner and stimulates DHX9-mediated ATPase activity. In terms of processing, the N-terminus is blocked. Post-translationally, isoform 1 is autoproteolytically cleaved to yield Nup98 and Nup96 or Nup98 only, respectively. Cleaved Nup98 is necessary for the targeting of Nup98 to the nuclear pore and the interaction with Nup96.

It localises to the nucleus membrane. It is found in the nucleus. Its subcellular location is the nuclear pore complex. The protein localises to the nucleoplasm. In terms of biological role, plays a role in the nuclear pore complex (NPC) assembly and/or maintenance. Involved in the bidirectional transport across the NPC. May anchor NUP153 and TPR to the NPC. Its function is as follows. Plays a role in the nuclear pore complex (NPC) assembly and/or maintenance. NUP98 and NUP96 are involved in the bidirectional transport across the NPC. May anchor NUP153 and TPR to the NPC. In cooperation with DHX9, plays a role in transcription and alternative splicing activation of a subset of genes. Involved in the localization of DHX9 in discrete intranuclear foci (GLFG-body). This chain is Nuclear pore complex protein Nup98-Nup96 (Nup98), found in Rattus norvegicus (Rat).